The sequence spans 130 residues: DNA-directed RNA polymerase subunit omega (130 aa).

Disordered regions lie at residues 79–98 and 109–130; these read EPEP…VDAD and EEEL…EEDE.

It belongs to the RNA polymerase subunit omega family. The RNAP catalytic core consists of 2 alpha, 1 beta, 1 beta' and 1 omega subunit. When a sigma factor is associated with the core the holoenzyme is formed, which can initiate transcription.

It carries out the reaction RNA(n) + a ribonucleoside 5'-triphosphate = RNA(n+1) + diphosphate. Its function is as follows. Promotes RNA polymerase assembly. Latches the N- and C-terminal regions of the beta' subunit thereby facilitating its interaction with the beta and alpha subunits. The protein is DNA-directed RNA polymerase subunit omega (rpoZ) of Bradyrhizobium diazoefficiens (strain JCM 10833 / BCRC 13528 / IAM 13628 / NBRC 14792 / USDA 110).